The primary structure comprises 94 residues: Acylphosphatase (94 aa).

Residues 8 to 94 (HIRAWVSGKV…ETPPLGFEVC (87 aa)) form the Acylphosphatase-like domain. Active-site residues include R23 and N41.

It belongs to the acylphosphatase family.

The catalysed reaction is an acyl phosphate + H2O = a carboxylate + phosphate + H(+). The sequence is that of Acylphosphatase (acyP) from Hahella chejuensis (strain KCTC 2396).